The sequence spans 147 residues: Transcriptional regulator MraZ (147 aa).

SpoVT-AbrB domains are found at residues 5–50 (AIAL…PLSA) and 79–122 (AQEE…SDAG).

Belongs to the MraZ family. Forms oligomers.

The protein resides in the cytoplasm. It is found in the nucleoid. The sequence is that of Transcriptional regulator MraZ from Aromatoleum aromaticum (strain DSM 19018 / LMG 30748 / EbN1) (Azoarcus sp. (strain EbN1)).